We begin with the raw amino-acid sequence, 207 residues long: Dephospho-CoA kinase (207 aa).

The region spanning 10–207 is the DPCK domain; the sequence is TLGLTGGIGS…FYLTLRGGQS (198 aa). Position 18–23 (18–23) interacts with ATP; that stretch reads GSGKSA.

This sequence belongs to the CoaE family.

It is found in the cytoplasm. It carries out the reaction 3'-dephospho-CoA + ATP = ADP + CoA + H(+). Its pathway is cofactor biosynthesis; coenzyme A biosynthesis; CoA from (R)-pantothenate: step 5/5. Catalyzes the phosphorylation of the 3'-hydroxyl group of dephosphocoenzyme A to form coenzyme A. The polypeptide is Dephospho-CoA kinase (Pseudomonas fluorescens (strain ATCC BAA-477 / NRRL B-23932 / Pf-5)).